A 260-amino-acid polypeptide reads, in one-letter code: Serine protease VLSP-1 (260 aa).

An N-terminal signal peptide occupies residues 1 to 18 (MVLIRVLANLLVLHLSYA). The propeptide occupies 19–24 (QKSSEL). The 227-residue stretch at 25–251 (VIGGDECNIN…YSDWIQSIIA (227 aa)) folds into the Peptidase S1 domain. Disulfide bonds link cysteine 31–cysteine 165, cysteine 52–cysteine 68, cysteine 100–cysteine 258, cysteine 144–cysteine 212, cysteine 176–cysteine 191, and cysteine 202–cysteine 227. N-linked (GlcNAc...) asparagine glycosylation is present at asparagine 44. Histidine 67 acts as the Charge relay system in catalysis. Residue asparagine 103 is glycosylated (N-linked (GlcNAc...) asparagine). Aspartate 112 (charge relay system) is an active-site residue. Asparagine 156 is a glycosylation site (N-linked (GlcNAc...) asparagine). Serine 206 serves as the catalytic Charge relay system.

Belongs to the peptidase S1 family. Snake venom subfamily. Expressed by the venom gland.

The protein resides in the secreted. Snake venom serine protease that may act in the hemostasis system of the prey. This chain is Serine protease VLSP-1, found in Macrovipera lebetinus (Levantine viper).